Reading from the N-terminus, the 101-residue chain is Enhancer of yellow 2 transcription factor (101 aa).

It belongs to the ENY2 family. As to quaternary structure, component of the nuclear pore complex (NPC)-associated TREX-2/AMEX complex (anchoring and mRNA export complex), composed of e(y)2, xmas and PCID2. Within the TREX-2/ AMEX complex, interactions with xmas is required for localization to the nuclear periphery. Component of the SAGA transcription coactivator-HAT complexes, at least composed of Ada2b, e(y)2, Pcaf/Gcn5, Taf10 and Nipped-A/Trrap. Within the SAGA complex, e(y)2, Sgf11, and not/nonstop form an additional subcomplex of SAGA called the DUB module (deubiquitination module). Component of the THO complex, composed of at least e(y)2, HPR1, THO2, THOC5, THOC6 and THOC7. Interacts with Taf9. Interacts with su(Hw) (via zinc fingers). Interacts with the nuclear pore complex (NPC). Interaction between the TREX-2/AMEX complex and the ORC complex is required for ORC localization to mRNPs, and consequently mRNA export. Within the TREX-2/AMEX-ORC complex, interacts with Orc6 and (via N-terminus or C-terminus) with Orc3. Interacts with the zinc finger protein CG9890. As to expression, ubiquitous.

It is found in the nucleus. The protein localises to the nucleoplasm. Its subcellular location is the cytoplasm. It localises to the nucleus membrane. In terms of biological role, involved in mRNA export coupled transcription activation by association with both the TREX-2/AMEX and the SAGA complexes. The SAGA complex is a multiprotein complex that activates transcription by remodeling chromatin and mediating histone acetylation and deubiquitination. Within the SAGA complex, participates in a subcomplex that specifically deubiquitinates histone H2B. The SAGA complex is recruited to specific gene promoters by activators, where it is required for transcription. Required for nuclear receptor-mediated transactivation. Involved in transcription elongation by recruiting the THO complex onto nascent mRNA. The TREX-2/AMEX complex functions in docking export-competent ribonucleoprotein particles (mRNPs) to the nuclear entrance of the nuclear pore complex (nuclear basket). TREX-2/AMEX participates in mRNA export and accurate chromatin positioning in the nucleus by tethering genes to the nuclear periphery. Recruited to the su(Hw) insulators via its interaction with su(Hw) and participates in the barrier activity of such insulators. In contrast, it does not participate in the enhancer-blocking activity of the su(Hw) insulators. The protein is Enhancer of yellow 2 transcription factor of Drosophila melanogaster (Fruit fly).